The chain runs to 208 residues: Large ribosomal subunit protein bL25 (208 aa).

The span at 186–201 (PAGEKSAAAEEGAAAA) shows a compositional bias: low complexity. The tract at residues 186–208 (PAGEKSAAAEEGAAAAGEDKPAA) is disordered.

The protein belongs to the bacterial ribosomal protein bL25 family. CTC subfamily. Part of the 50S ribosomal subunit; part of the 5S rRNA/L5/L18/L25 subcomplex. Contacts the 5S rRNA. Binds to the 5S rRNA independently of L5 and L18.

Its function is as follows. This is one of the proteins that binds to the 5S RNA in the ribosome where it forms part of the central protuberance. This Ralstonia pickettii (strain 12J) protein is Large ribosomal subunit protein bL25.